A 335-amino-acid chain; its full sequence is Glycerol-3-phosphate dehydrogenase [NAD(P)+] (335 aa).

Residues S12, W13, R33, R34, and K107 each contribute to the NADPH site. 3 residues coordinate sn-glycerol 3-phosphate: K107, G134, and S136. Residue A138 coordinates NADPH. Residues K189, D242, S252, R253, and N254 each coordinate sn-glycerol 3-phosphate. The Proton acceptor role is filled by K189. Residue R253 coordinates NADPH. Positions 277 and 279 each coordinate NADPH.

The protein belongs to the NAD-dependent glycerol-3-phosphate dehydrogenase family.

It localises to the cytoplasm. The catalysed reaction is sn-glycerol 3-phosphate + NAD(+) = dihydroxyacetone phosphate + NADH + H(+). The enzyme catalyses sn-glycerol 3-phosphate + NADP(+) = dihydroxyacetone phosphate + NADPH + H(+). It functions in the pathway membrane lipid metabolism; glycerophospholipid metabolism. Catalyzes the reduction of the glycolytic intermediate dihydroxyacetone phosphate (DHAP) to sn-glycerol 3-phosphate (G3P), the key precursor for phospholipid synthesis. The polypeptide is Glycerol-3-phosphate dehydrogenase [NAD(P)+] (Moorella thermoacetica (strain ATCC 39073 / JCM 9320)).